The primary structure comprises 198 residues: Small ribosomal subunit protein eS1 (198 aa).

Belongs to the eukaryotic ribosomal protein eS1 family.

This Methanospirillum hungatei JF-1 (strain ATCC 27890 / DSM 864 / NBRC 100397 / JF-1) protein is Small ribosomal subunit protein eS1.